The chain runs to 327 residues: Fructose import binding protein FruE (327 aa).

The N-terminal stretch at 1 to 22 (MKNWKKAIALVASAAALVSVAA) is a signal peptide. A lipid anchor (N-palmitoyl cysteine) is attached at cysteine 23. A lipid anchor (S-diacylglycerol cysteine) is attached at cysteine 23.

The protein belongs to the bacterial solute-binding protein 2 family. As to quaternary structure, the complex is composed of an ATP-binding protein (FruK), two transmembrane proteins (FruF and FruG) and a solute-binding protein (FruE).

The protein resides in the cell membrane. Functionally, part of the high-affinity ABC transporter complex FruEKFG involved in fructose uptake. Can also transport ribose and xylose, with lower affinity. Binds fructose, ribose and xylose, with fructose as the preferred substrate. This Bifidobacterium longum (strain NCC 2705) protein is Fructose import binding protein FruE.